The primary structure comprises 243 residues: Fibroblast growth factor 12 (243 aa).

Disordered regions lie at residues 1–39 (MAAA…DGRS) and 216–243 (IGEK…QDST). A Bipartite nuclear localization signal motif is present at residues 11-38 (RQKRQARESNSDRVSASKRRSSPSKDGR).

It belongs to the heparin-binding growth factors family. As to quaternary structure, interacts with the C-terminal region of SCN9A. As to expression, brain, eye and testis; highly expressed in embryonic retina, olfactory epithelium, olfactory bulb, and in a segmental pattern of the body wall; in adult olfactory bulb, less in cerebellum, deep cerebellar nuclei, cortex and multiple midbrain structures.

The protein localises to the nucleus. Its function is as follows. Involved in nervous system development and function. Involved in the positive regulation of voltage-gated sodium channel activity. Promotes neuronal excitability by elevating the voltage dependence of neuronal sodium channel SCN8A fast inactivation. The protein is Fibroblast growth factor 12 (FGF12) of Homo sapiens (Human).